A 283-amino-acid chain; its full sequence is Movement protein (283 aa).

Belongs to the tenuiviruses pc4 protein family.

In terms of biological role, transports viral genome to neighboring plant cells directly through plasmosdesmata, without any budding. The movement protein allows efficient cell to cell propagation, by bypassing the host cell wall barrier. The chain is Movement protein from Maize stripe virus (MStV).